A 308-amino-acid chain; its full sequence is Bacitracin transport ATP-binding protein BcrA (308 aa).

The ABC transporter domain occupies 8 to 236 (IETENLTKQY…NRKYTEFDVS (229 aa)). ATP is bound at residue 40 to 47 (GRNGAGKT).

It belongs to the ABC transporter superfamily. In terms of assembly, the complex is probably composed of two ATP-binding proteins (BcrA) and two transmembrane proteins (BcrB).

Functionally, essential for high-level bacitracin resistance. Part of the ABC transporter complex BcrAB. Probably responsible for energy coupling to the transport system. The sequence is that of Bacitracin transport ATP-binding protein BcrA from Enterococcus faecalis (Streptococcus faecalis).